Here is a 357-residue protein sequence, read N- to C-terminus: Sulfate/thiosulfate import ATP-binding protein CysA (357 aa).

The region spanning I3–L237 is the ABC transporter domain. Residue G35–T42 coordinates ATP.

This sequence belongs to the ABC transporter superfamily. Sulfate/tungstate importer (TC 3.A.1.6) family. In terms of assembly, the complex is composed of two ATP-binding proteins (CysA), two transmembrane proteins (CysT and CysW) and a solute-binding protein (CysP).

It is found in the cell membrane. The catalysed reaction is sulfate(out) + ATP + H2O = sulfate(in) + ADP + phosphate + H(+). It carries out the reaction thiosulfate(out) + ATP + H2O = thiosulfate(in) + ADP + phosphate + H(+). Functionally, part of the ABC transporter complex CysAWTP involved in sulfate/thiosulfate import. Responsible for energy coupling to the transport system. This is Sulfate/thiosulfate import ATP-binding protein CysA from Bacillus cereus (strain ATCC 10987 / NRS 248).